The following is a 383-amino-acid chain: tRNA-specific 2-thiouridylase MnmA (383 aa).

ATP-binding positions include 6–13 and Leu-32; that span reads AMSGGVDS. The active-site Nucleophile is the Cys-101. A disulfide bridge connects residues Cys-101 and Cys-199. Gly-125 contributes to the ATP binding site. Residues 148–150 are interaction with tRNA; the sequence is KDQ. The active-site Cysteine persulfide intermediate is the Cys-199.

This sequence belongs to the MnmA/TRMU family.

It is found in the cytoplasm. It carries out the reaction S-sulfanyl-L-cysteinyl-[protein] + uridine(34) in tRNA + AH2 + ATP = 2-thiouridine(34) in tRNA + L-cysteinyl-[protein] + A + AMP + diphosphate + H(+). Functionally, catalyzes the 2-thiolation of uridine at the wobble position (U34) of tRNA, leading to the formation of s(2)U34. This Kocuria rhizophila (strain ATCC 9341 / DSM 348 / NBRC 103217 / DC2201) protein is tRNA-specific 2-thiouridylase MnmA.